The following is a 305-amino-acid chain: MVRIVIALGGNALLRNGEPRNYEVQYSHAIETFKIIRDITEKNETVITHGNGPQVGDIQQSHEISGIMANLHQSVAMSQGYIGEILANAYDEVRSKYSLSKSIFTIITRSVVNRNDPAFASPEKPIGRYYSDQEVDEAKRNGWVMKKFKDGWRRVVPSPEPIEILEEKAIEELVREGHIPLAVGGGGIPVVKENGRIVGIDAVIDKDIASSLLAAQLKADYFMILTDVESVYVNFGKPDQKPLGRIHLNEIEKYYAEGQFADGSMKPKVRAAINFVKNGGKAAFITNLENGSAALSGKAGTVIVP.

This sequence belongs to the carbamate kinase family.

It localises to the cytoplasm. It carries out the reaction hydrogencarbonate + NH4(+) + ATP = carbamoyl phosphate + ADP + H2O + H(+). It functions in the pathway metabolic intermediate metabolism; carbamoyl phosphate degradation; CO(2) and NH(3) from carbamoyl phosphate: step 1/1. This is Carbamate kinase (arcC) from Thermoplasma volcanium (strain ATCC 51530 / DSM 4299 / JCM 9571 / NBRC 15438 / GSS1).